A 528-amino-acid chain; its full sequence is Acid-sensing ion channel 1 (528 aa).

Over 1–49 the chain is Cytoplasmic; the sequence is MELKAEEEEVGGVQPVSIQAFASSSTLHGLAHIFSYERLSLKRALWALC. Residues 50–66 traverse the membrane as a helical segment; sequence FLGSLAVLLCVCTERVQ. Residues 67–427 lie on the Extracellular side of the membrane; sequence YYFHYHHVTK…ETIEQKKAYE (361 aa). Cystine bridges form between C93/C194, C172/C179, C290/C367, C310/C363, C314/C361, C323/C345, and C325/C337. 2 N-linked (GlcNAc...) asparagine glycosylation sites follow: N368 and N395. Residues 428-458 traverse the membrane as a discontinuously helical segment; the sequence is IAGLLGDIGGQMGLFIGASILTVLELFDYAY. The GAS motif; ion selectivity filter signature appears at 444 to 446; sequence GAS. Residues 459-528 lie on the Cytoplasmic side of the membrane; sequence EVIKHKLCRR…ARGTFEDFTC (70 aa). S479 carries the post-translational modification Phosphoserine; by PKA. Phosphoserine is present on S499.

Belongs to the amiloride-sensitive sodium channel (TC 1.A.6) family. ASIC1 subfamily. Forms functional homotrimeric channels. Forms heterotrimers with other ASIC proteins, resulting in channels with distinct properties. Interacts with PICK1; regulates ASIC1 clustering in membranes. Interacts with STOM; alters heterotrimeric channels activity. Post-translationally, pH-gating could be regulated by serine proteases. Phosphorylation by PKA regulates interaction with PICK1 and subcellular localization. Phosphorylation by PKC may regulate the channel. As to expression, expressed in neurons throughout the central and peripheral nervous system.

Its subcellular location is the cell membrane. The protein localises to the postsynaptic cell membrane. The protein resides in the cell projection. It localises to the dendrite. The catalysed reaction is Na(+)(in) = Na(+)(out). The enzyme catalyses K(+)(in) = K(+)(out). It catalyses the reaction Li(+)(in) = Li(+)(out). It carries out the reaction Ca(2+)(in) = Ca(2+)(out). Potentiated by FMRFamide-related neuropeptides, which are induced during inflammation and modulate pain responses. Inhibited by the diuretic drug amiloride. Spider venom psalmotoxin-1 inhibits the channel by locking it in its desensitized conformation. The homotrimeric channel is inhibited by the spider venom pi-theraphotoxin-Hm3a. Homotrimeric and heterotrimeric (with ASIC2 isoform 1) channels are inhibited by the snake venom mambalgin-1, which prevents proton-induced transitions from the resting closed state to the active and/or desensitized states. Inhibited by Texas coral snake toxin MitTx1. Forms voltage-independent, pH-gated trimeric sodium channels that act as postsynaptic excitatory receptors in the nervous system, playing a crucial role in regulating synaptic plasticity, learning, and memory. Upon extracellular pH drop this channel elicits transient, fast activating, and completely desensitizing inward currents. Displays high selectivity for sodium ions but can also permit the permeation of other cations. Regulates more or less directly intracellular calcium concentration and CaMKII phosphorylation, and thereby the density of dendritic spines. Modulates neuronal activity in the circuits underlying innate fear. Its function is as follows. Has high selectivity for sodium ions, but can also be permeable to other cations including calcium, lithium and potassium. Functionally, produces acid activated currents with a reduced amplitude and inactivates faster. Has high selectivity for sodium ions but also supports a calcium-mediated current which is sustained and maintained as long as acidic conditions are present. Also potentially permeable to lithium and potassium. In terms of biological role, has no measurable proton-gated sodium channel activity in vitro. The protein is Acid-sensing ion channel 1 of Homo sapiens (Human).